We begin with the raw amino-acid sequence, 277 residues long: MNKKSIWSKTAFGSLFLLLGTAFTACSNYDFQANLTSLNQLRTSANKDINLTQDKNTLIDALKTAFENNSEGTTKVLLDAWKFSLYDAKILEKQDPVKFVKAFGSGKSKEDIEPSAGVRGLRFVERFGDNTASLIKNAILLDQQKVEVFNIRFKSSRDFTIQIKLNAKGNYKKSEVEKYKSQIGVQDNELGDKEEGTLEADLIFTYTPPASNLFSKSNFDKLTKSINFNTNLKLEMVGKDEVMRKILNSSAFTNNLASVNYPNQAVNLLPYVLYSIL.

An N-terminal signal peptide occupies residues 1-25 (MNKKSIWSKTAFGSLFLLLGTAFTA). Cys26 carries the N-palmitoyl cysteine lipid modification. A lipid anchor (S-diacylglycerol cysteine) is attached at Cys26.

It belongs to the MG439/MG440 family.

The protein localises to the cell membrane. This is an uncharacterized protein from Mycoplasma pneumoniae (strain ATCC 29342 / M129 / Subtype 1) (Mycoplasmoides pneumoniae).